The chain runs to 265 residues: ATP synthase subunit a (265 aa).

Transmembrane regions (helical) follow at residues 26–46 (VHLD…FFFY), 88–108 (IGSL…IDLI), 132–152 (DISA…FYTI), 168–188 (PFNH…TLLA), 195–217 (FRLF…MYMA), and 231–251 (LIWA…FMML).

Belongs to the ATPase A chain family. F-type ATPases have 2 components, CF(1) - the catalytic core - and CF(0) - the membrane proton channel. CF(1) has five subunits: alpha(3), beta(3), gamma(1), delta(1), epsilon(1). CF(0) has three main subunits: a(1), b(2) and c(9-12). The alpha and beta chains form an alternating ring which encloses part of the gamma chain. CF(1) is attached to CF(0) by a central stalk formed by the gamma and epsilon chains, while a peripheral stalk is formed by the delta and b chains.

It localises to the cell inner membrane. In terms of biological role, key component of the proton channel; it plays a direct role in the translocation of protons across the membrane. This Histophilus somni (strain 2336) (Haemophilus somnus) protein is ATP synthase subunit a.